The sequence spans 434 residues: Monodehydroascorbate reductase, seedling isozyme (434 aa).

Residues 13 to 16 (GGVA), E40, R47, K52, I95, and 146 to 147 (RE) each bind FAD. NAD(+) contacts are provided by residues 171–177 (GGYIGLE), E195, R201, and G260. An NADP(+)-binding site is contributed by 173–177 (YIGLE). R201 and G260 together coordinate NADP(+). Position 297 (D297) interacts with FAD. 313–314 (EH) is an NAD(+) binding site. NADP(+) is bound at residue 313-314 (EH). V315 provides a ligand contact to FAD. R319 provides a ligand contact to L-ascorbate. Y348 serves as a coordination point for FAD. Y348 contributes to the NAD(+) binding site. Y348 contacts NADP(+). R350 contacts L-ascorbate.

This sequence belongs to the FAD-dependent oxidoreductase family. FAD serves as cofactor.

Its subcellular location is the cytoplasm. It carries out the reaction 2 monodehydro-L-ascorbate radical + NADH + H(+) = 2 L-ascorbate + NAD(+). Catalyzes the conversion of monodehydroascorbate to ascorbate, oxidizing NADH in the process. This chain is Monodehydroascorbate reductase, seedling isozyme, found in Cucumis sativus (Cucumber).